We begin with the raw amino-acid sequence, 184 residues long: Ras-related protein Rap-1b (184 aa).

10–17 (GSGGVGKS) contacts GTP. The Effector region signature appears at 32–40 (YDPTIEDSY). GTP is bound by residues 57–61 (DTAGT) and 116–119 (NKCD). At Cys181 the chain carries Cysteine methyl ester. Cys181 carries the S-geranylgeranyl cysteine lipid modification. A propeptide spans 182–184 (HLL) (removed in mature form).

It belongs to the small GTPase superfamily. Ras family.

It is found in the cell membrane. It localises to the cytoplasm. Its subcellular location is the cytosol. The protein localises to the cell junction. The enzyme catalyses GTP + H2O = GDP + phosphate + H(+). Functionally, probable GTP-binding protein that possesses GTPase activity. May play a role in endothelial cell polarity and endothelial barrier function. The chain is Ras-related protein Rap-1b (rap1b) from Xenopus laevis (African clawed frog).